Here is a 313-residue protein sequence, read N- to C-terminus: N-acetyl-gamma-glutamyl-phosphate reductase (313 aa).

The active site involves C117.

This sequence belongs to the NAGSA dehydrogenase family. Type 2 subfamily.

It is found in the cytoplasm. It carries out the reaction N-acetyl-L-glutamate 5-semialdehyde + phosphate + NADP(+) = N-acetyl-L-glutamyl 5-phosphate + NADPH + H(+). The protein operates within amino-acid biosynthesis; L-arginine biosynthesis; N(2)-acetyl-L-ornithine from L-glutamate: step 3/4. Catalyzes the NADPH-dependent reduction of N-acetyl-5-glutamyl phosphate to yield N-acetyl-L-glutamate 5-semialdehyde. This chain is N-acetyl-gamma-glutamyl-phosphate reductase, found in Burkholderia cenocepacia (strain HI2424).